Consider the following 188-residue polypeptide: Elongation factor P (188 aa).

Belongs to the elongation factor P family.

It localises to the cytoplasm. The protein operates within protein biosynthesis; polypeptide chain elongation. Functionally, involved in peptide bond synthesis. Stimulates efficient translation and peptide-bond synthesis on native or reconstituted 70S ribosomes in vitro. Probably functions indirectly by altering the affinity of the ribosome for aminoacyl-tRNA, thus increasing their reactivity as acceptors for peptidyl transferase. The sequence is that of Elongation factor P from Ralstonia nicotianae (strain ATCC BAA-1114 / GMI1000) (Ralstonia solanacearum).